We begin with the raw amino-acid sequence, 483 residues long: UDP-glucosyl transferase 73B2 (483 aa).

The Proton acceptor role is filled by His22. An an anthocyanidin-binding site is contributed by His22. Asp133 functions as the Charge relay in the catalytic mechanism. 7 residues coordinate UDP-alpha-D-glucose: Ala355, Gln357, His372, Trp375, Asn376, Ser377, and Glu380. Ala395 is an an anthocyanidin binding site. UDP-alpha-D-glucose-binding residues include Glu396 and Gln397.

It belongs to the UDP-glycosyltransferase family. In terms of tissue distribution, expressed in roots and flowers.

It catalyses the reaction a 7-O-hydroxy-flavonol + UDP-alpha-D-glucose = a flavonol 7-O-beta-D-glucoside + UDP + H(+). It participates in secondary metabolite biosynthesis; flavonoid biosynthesis. In terms of biological role, catalyzes the glycosylation of flavonoids from UDP-glucose. Uses a wide range of flavonoid substrates including flavonols (quercetin, kaempferol, isorhamnetin, 3-OH 7,2',4'-MeO-flavone), flavones (luteolin, apigenin), flavanones (naringenin, hesperetin), flavanonols (taxifolin), isoflavones (genistein, daidzein), flavonol glycosides (quercitrin, isoquercitrin, rutin), and chalcones (isoliquiritigenin). Specific for the C-7 position, with a 20-fold lower activity for the C-3 position. This chain is UDP-glucosyl transferase 73B2 (UGT73B2), found in Arabidopsis thaliana (Mouse-ear cress).